Here is a 114-residue protein sequence, read N- to C-terminus: Iron-sulfur cluster insertion protein ErpA (114 aa).

Iron-sulfur cluster contacts are provided by Cys42, Cys106, and Cys108.

The protein belongs to the HesB/IscA family. In terms of assembly, homodimer. Iron-sulfur cluster serves as cofactor.

Required for insertion of 4Fe-4S clusters for at least IspG. This Klebsiella pneumoniae subsp. pneumoniae (strain ATCC 700721 / MGH 78578) protein is Iron-sulfur cluster insertion protein ErpA.